The chain runs to 184 residues: Protein GrpE (184 aa).

The disordered stretch occupies residues 1–24; sequence MADEQLDEKNLNSEEAGAVNGDAR.

It belongs to the GrpE family. Homodimer.

It is found in the cytoplasm. Participates actively in the response to hyperosmotic and heat shock by preventing the aggregation of stress-denatured proteins, in association with DnaK and GrpE. It is the nucleotide exchange factor for DnaK and may function as a thermosensor. Unfolded proteins bind initially to DnaJ; upon interaction with the DnaJ-bound protein, DnaK hydrolyzes its bound ATP, resulting in the formation of a stable complex. GrpE releases ADP from DnaK; ATP binding to DnaK triggers the release of the substrate protein, thus completing the reaction cycle. Several rounds of ATP-dependent interactions between DnaJ, DnaK and GrpE are required for fully efficient folding. This is Protein GrpE from Pseudomonas entomophila (strain L48).